We begin with the raw amino-acid sequence, 411 residues long: Carbohydrate sulfotransferase 5 (411 aa).

The Cytoplasmic portion of the chain corresponds to 1-30 (MGMRARVPKVAHSTRRPPAARMWLPRFSSK). A helical; Signal-anchor for type II membrane protein transmembrane segment spans residues 31-48 (TVTVLLLAQTTCLLLFII). At 49–411 (SRPGPSSPAG…PDHFSWASPD (363 aa)) the chain is on the lumenal side. Position 71-77 (71-77 (WRSGSSF)) interacts with 3'-phosphoadenylyl sulfate. N138 is a glycosylation site (N-linked (GlcNAc...) asparagine). 224–232 (RDPRAVLRS) is a binding site for 3'-phosphoadenylyl sulfate. N327 and N350 each carry an N-linked (GlcNAc...) asparagine glycan.

This sequence belongs to the sulfotransferase 1 family. Gal/GlcNAc/GalNAc subfamily. As to expression, predominantly expressed in small and large intestines and colon. Weakly expressed in lymphocytes. Not expressed in other tissues. Down-regulated in colonic adenocarcinomas.

It localises to the golgi apparatus membrane. In terms of biological role, sulfotransferase that utilizes 3'-phospho-5'-adenylyl sulfate (PAPS) as sulfonate donor to catalyze the transfer of sulfate to position 6 of non-reducing N-acetylglucosamine (GlcNAc) residues and O-linked sugars of mucin-type acceptors. Acts on the non-reducing terminal GlcNAc of short carbohydrate substrates. However, it does not transfer sulfate to longer carbohydrate substrates that have poly-N-acetyllactosamine structures. Has no activity toward keratan. Not involved in generating HEV-expressed ligands for SELL. Its substrate specificity may be influenced by its subcellular location. The polypeptide is Carbohydrate sulfotransferase 5 (CHST5) (Homo sapiens (Human)).